We begin with the raw amino-acid sequence, 356 residues long: Peptide methionine sulfoxide reductase MsrA/MsrB (356 aa).

Positions 46 to 199 (HEIYLAGGCF…PNGYCHIDLE (154 aa)) are peptide methionine sulfoxide reductase A. Residue cysteine 54 is part of the active site. Residues 216–339 (DAELKAKLTP…NSAAVKFIPL (124 aa)) enclose the MsrB domain. Residue cysteine 328 is the Nucleophile of the active site.

It in the N-terminal section; belongs to the MsrA Met sulfoxide reductase family. In the C-terminal section; belongs to the MsrB Met sulfoxide reductase family.

It carries out the reaction L-methionyl-[protein] + [thioredoxin]-disulfide + H2O = L-methionyl-(S)-S-oxide-[protein] + [thioredoxin]-dithiol. The enzyme catalyses [thioredoxin]-disulfide + L-methionine + H2O = L-methionine (S)-S-oxide + [thioredoxin]-dithiol. The catalysed reaction is L-methionyl-[protein] + [thioredoxin]-disulfide + H2O = L-methionyl-(R)-S-oxide-[protein] + [thioredoxin]-dithiol. Functionally, has an important function as a repair enzyme for proteins that have been inactivated by oxidation. Catalyzes the reversible oxidation-reduction of methionine sulfoxide in proteins to methionine. This Aggregatibacter actinomycetemcomitans (Actinobacillus actinomycetemcomitans) protein is Peptide methionine sulfoxide reductase MsrA/MsrB (msrAB).